Reading from the N-terminus, the 226-residue chain is Ribonuclease 3 (226 aa).

The RNase III domain maps to 2–129; that stretch reads IETISKTIKY…LIGAIYLDGG (128 aa). Residue Glu42 coordinates Mg(2+). Residue Asp46 is part of the active site. Residues Asn115 and Glu118 each contribute to the Mg(2+) site. The active site involves Glu118. Positions 154 to 223 constitute a DRBM domain; sequence DAKTILQEFI…ASLMLNQIKD (70 aa).

The protein belongs to the ribonuclease III family. Homodimer. Mg(2+) is required as a cofactor.

It is found in the cytoplasm. The enzyme catalyses Endonucleolytic cleavage to 5'-phosphomonoester.. Its function is as follows. Digests double-stranded RNA. Involved in the processing of primary rRNA transcript to yield the immediate precursors to the large and small rRNAs (23S and 16S). Processes some mRNAs, and tRNAs when they are encoded in the rRNA operon. Processes pre-crRNA and tracrRNA of type II CRISPR loci if present in the organism. This Ehrlichia canis (strain Jake) protein is Ribonuclease 3.